Here is a 611-residue protein sequence, read N- to C-terminus: Mitogen-activated protein kinase 10 (611 aa).

Residues 25–316 (YKIQEVIGKG…AEEALAHPYF (292 aa)) enclose the Protein kinase domain. ATP is bound by residues 31–39 (IGKGSYGVV) and Lys-54. Asp-151 functions as the Proton acceptor in the catalytic mechanism. Position 187 is a phosphothreonine (Thr-187). The short motif at 187-189 (TDY) is the TXY element. Tyr-189 carries the post-translational modification Phosphotyrosine. The interval 394-481 (ENGGNGPVIP…RVVGPVLPYE (88 aa)) is disordered. Positions 426-439 (EQPRIGPSRDKPSD) are enriched in basic and acidic residues.

It belongs to the protein kinase superfamily. CMGC Ser/Thr protein kinase family. MAP kinase subfamily. In terms of processing, dually phosphorylated on Thr-187 and Tyr-189, which activates the enzyme.

The catalysed reaction is L-seryl-[protein] + ATP = O-phospho-L-seryl-[protein] + ADP + H(+). It catalyses the reaction L-threonyl-[protein] + ATP = O-phospho-L-threonyl-[protein] + ADP + H(+). Activated by threonine and tyrosine phosphorylation. The protein is Mitogen-activated protein kinase 10 (MPK10) of Oryza sativa subsp. japonica (Rice).